The chain runs to 149 residues: Transcriptional repressor NrdR (149 aa).

The segment at 3 to 34 is a zinc-finger region; it reads CPFCSHLETQVIETRVFEDAASIRRRRQCAAC. Residues 49 to 139 form the ATP-cone domain; it reads PAVVKKDGRR…VYRSFEGIDD (91 aa).

The protein belongs to the NrdR family. It depends on Zn(2+) as a cofactor.

Negatively regulates transcription of bacterial ribonucleotide reductase nrd genes and operons by binding to NrdR-boxes. In Verminephrobacter eiseniae (strain EF01-2), this protein is Transcriptional repressor NrdR.